The primary structure comprises 379 residues: MARRSAFPAAALWLWSILLCLLALRAEAGPPQEESLYLWIDAHQARVLIGFEEDILIVSEGKMAPFTHDFRKAQQRMPAIPVNIHSMNFTWQAAGQAEYFYEFLSLRSLDKGIMADPTVNVPLLGTVPHKASVVQVGFPCLGKQDGVAAFEVDVIVMNSEGNTILQTPQNAIFFKTCQQAECPGGCRNGGFCNERRICECPDGFHGPHCEKALCTPRCMNGGLCVTPGFCICPPGFYGVNCDKANCSTTCFNGGTCFYPGKCICPPGLEGEQCEISKCPQPCRNGGKCIGKSKCKCSKGYQGDLCSKPVCEPGCGAHGTCHEPNKCQCQEGWHGRHCNKRYEASLIHALRPAGAQLRQHTPSLKKAEERRDPPESNYIW.

The signal sequence occupies residues 1-28 (MARRSAFPAAALWLWSILLCLLALRAEA). The WIF domain maps to 38-177 (LWIDAHQARV…PQNAIFFKTC (140 aa)). Asparagine 88 carries an N-linked (GlcNAc...) asparagine glycan. 7 disulfides stabilise this stretch: cysteine 140–cysteine 177, cysteine 182–cysteine 192, cysteine 186–cysteine 198, cysteine 200–cysteine 209, cysteine 214–cysteine 224, cysteine 218–cysteine 230, and cysteine 232–cysteine 241. EGF-like domains lie at 178-210 (QQAE…PHCE), 211-242 (KALC…VNCD), 243-271 (KANC…LEGE), 274-306 (EISK…DLCS), and 307-338 (KPVC…RHCN). N-linked (GlcNAc...) asparagine glycosylation is present at asparagine 245. 8 cysteine pairs are disulfide-bonded: cysteine 246/cysteine 256, cysteine 250/cysteine 262, cysteine 278/cysteine 288, cysteine 282/cysteine 294, cysteine 296/cysteine 305, cysteine 310/cysteine 320, cysteine 314/cysteine 326, and cysteine 328/cysteine 337. A disordered region spans residues 354–379 (AQLRQHTPSLKKAEERRDPPESNYIW). Residues 364–373 (KKAEERRDPP) show a composition bias toward basic and acidic residues.

In terms of assembly, interacts with MYOC.

The protein localises to the secreted. In terms of biological role, binds to WNT proteins and inhibits their activities. May be involved in mesoderm segmentation. This Homo sapiens (Human) protein is Wnt inhibitory factor 1 (WIF1).